The chain runs to 205 residues: ATP-dependent Clp protease proteolytic subunit (205 aa).

Ser-98 functions as the Nucleophile in the catalytic mechanism. The active site involves His-123.

This sequence belongs to the peptidase S14 family. In terms of assembly, fourteen ClpP subunits assemble into 2 heptameric rings which stack back to back to give a disk-like structure with a central cavity, resembling the structure of eukaryotic proteasomes.

It localises to the cytoplasm. It catalyses the reaction Hydrolysis of proteins to small peptides in the presence of ATP and magnesium. alpha-casein is the usual test substrate. In the absence of ATP, only oligopeptides shorter than five residues are hydrolyzed (such as succinyl-Leu-Tyr-|-NHMec, and Leu-Tyr-Leu-|-Tyr-Trp, in which cleavage of the -Tyr-|-Leu- and -Tyr-|-Trp bonds also occurs).. Cleaves peptides in various proteins in a process that requires ATP hydrolysis. Has a chymotrypsin-like activity. Plays a major role in the degradation of misfolded proteins. This chain is ATP-dependent Clp protease proteolytic subunit, found in Desulfosudis oleivorans (strain DSM 6200 / JCM 39069 / Hxd3) (Desulfococcus oleovorans).